The following is a 475-amino-acid chain: Terminase, large subunit (475 aa).

Residues 1-58 are interaction with the terminase small subunit; that stretch reads MELDAILDNLSDEEQIELLELLEEEENYRNTHLLYEFTPYSKQREFIDAGHDYQSDVL. The tract at residues 1 to 282 is ATPase activity; it reads MELDAILDNL…EHEREARARG (282 aa). The interval 308–475 is nuclease activity; sequence DHFYVIDAQD…MRLRQDDARY (168 aa). Mg(2+) contacts are provided by D317 and D455.

This sequence belongs to the Lederbergvirus large terminase family. As to quaternary structure, interacts with the terminase small subunit; the active complex is composed of dimer of terminase large subunits and a nonamer ring of terminase small subunits. Interacts with the portal protein; this interaction allows the packaging of viral DNA. The cofactor is Mg(2+).

Functionally, the terminase large subunit acts as an ATP driven molecular motor necessary for viral DNA translocation into empty capsids and as an endonuclease that cuts the viral genome to initiate and to end a packaging reaction. The terminase lies at a unique vertex of the procapsid and is composed of two subunits, a small terminase subunit involved in viral DNA recognition (packaging 'pac' sequence), and a large terminase subunit possessing endonucleolytic and ATPase activities. Both terminase subunits heterooligomerize and are docked on the portal protein to form the packaging machine. The terminase large subunit exhibits endonuclease activity and cleaves the viral genome concatemer once the capsid is full (headful packaging). Once the capsid is packaged with the DNA, the terminase complex is substituted by the tail. This chain is Terminase, large subunit (2), found in Salmonella (Bacteriophage LP7).